Reading from the N-terminus, the 352-residue chain is Phosphoribosylformylglycinamidine cyclo-ligase (352 aa).

Belongs to the AIR synthase family.

It is found in the cytoplasm. It carries out the reaction 2-formamido-N(1)-(5-O-phospho-beta-D-ribosyl)acetamidine + ATP = 5-amino-1-(5-phospho-beta-D-ribosyl)imidazole + ADP + phosphate + H(+). It participates in purine metabolism; IMP biosynthesis via de novo pathway; 5-amino-1-(5-phospho-D-ribosyl)imidazole from N(2)-formyl-N(1)-(5-phospho-D-ribosyl)glycinamide: step 2/2. In Coxiella burnetii (strain RSA 331 / Henzerling II), this protein is Phosphoribosylformylglycinamidine cyclo-ligase.